The sequence spans 328 residues: Tetraacyldisaccharide 4'-kinase (328 aa).

55-62 (TAGGNGKT) lines the ATP pocket.

It belongs to the LpxK family.

The catalysed reaction is a lipid A disaccharide + ATP = a lipid IVA + ADP + H(+). It participates in glycolipid biosynthesis; lipid IV(A) biosynthesis; lipid IV(A) from (3R)-3-hydroxytetradecanoyl-[acyl-carrier-protein] and UDP-N-acetyl-alpha-D-glucosamine: step 6/6. Functionally, transfers the gamma-phosphate of ATP to the 4'-position of a tetraacyldisaccharide 1-phosphate intermediate (termed DS-1-P) to form tetraacyldisaccharide 1,4'-bis-phosphate (lipid IVA). In Escherichia coli (strain K12 / MC4100 / BW2952), this protein is Tetraacyldisaccharide 4'-kinase.